Consider the following 211-residue polypeptide: Large ribosomal subunit protein eL13 (211 aa).

Lysine 16 carries the N6-acetyllysine modification. Phosphoserine occurs at positions 52, 77, and 106. Glycyl lysine isopeptide (Lys-Gly) (interchain with G-Cter in SUMO2) cross-links involve residues lysine 123 and lysine 145. A Glycyl lysine isopeptide (Lys-Gly) (interchain with G-Cter in SUMO1); alternate cross-link involves residue lysine 174. Residues lysine 174 and lysine 177 each participate in a glycyl lysine isopeptide (Lys-Gly) (interchain with G-Cter in SUMO2); alternate cross-link. At lysine 177 the chain carries N6-acetyllysine; alternate.

The protein belongs to the eukaryotic ribosomal protein eL13 family. Component of the large ribosomal subunit.

The protein resides in the cytoplasm. Its function is as follows. Component of the large ribosomal subunit. The ribosome is a large ribonucleoprotein complex responsible for the synthesis of proteins in the cell. This chain is Large ribosomal subunit protein eL13 (Rpl13), found in Mus musculus (Mouse).